Reading from the N-terminus, the 542-residue chain is Trans-alpha-bergamotene synthase (542 aa).

The Mg(2+) site is built by Asp-295, Asp-299, Asp-439, Thr-443, and Glu-447. The DDXXD motif motif lies at 295–299 (DDFYD).

This sequence belongs to the terpene synthase family. Mg(2+) serves as cofactor.

It catalyses the reaction (2E,6E)-farnesyl diphosphate = (1S,5S,6R)-alpha-bergamotene + diphosphate. It participates in secondary metabolite biosynthesis; terpenoid biosynthesis. In terms of biological role, sesquiterpene synthase converting farnesyl diphosphate to trans-alpha-bergamotene as the major product. The sequence is that of Trans-alpha-bergamotene synthase from Phyla dulcis (Aztec sweet herb).